The chain runs to 111 residues: Flagellar hook-basal body complex protein FliE (111 aa).

It belongs to the FliE family.

It is found in the bacterial flagellum basal body. This is Flagellar hook-basal body complex protein FliE from Clostridium acetobutylicum (strain ATCC 824 / DSM 792 / JCM 1419 / IAM 19013 / LMG 5710 / NBRC 13948 / NRRL B-527 / VKM B-1787 / 2291 / W).